A 229-amino-acid chain; its full sequence is MAKKKAFIPFFYFTSIVFLPWLISLCCNKSLKTWITNWWNTRQCETFLNDIQEKSVLEKFIQLEELFQLDEMIKEYPETDLQQFRLGIHKETIQFIKIHNEYRIHTILHFSTNLISFVILSGYSFWGKEKLFILNSWVQEFLYNLSDTIKAFSILLLTDLCIGFHSPHGWELMIGYIYKDFGFAHYEQILSGLVSTFPVILDTIFKYWIFRYLNRVSPSLVVIYHAIND.

Helical transmembrane passes span 6 to 26 (AFIP…ISLC), 107 to 127 (ILHF…SFWG), and 189 to 209 (ILSG…KYWI).

Belongs to the CemA family.

It is found in the plastid. The protein localises to the chloroplast inner membrane. The enzyme catalyses K(+)(in) + H(+)(out) = K(+)(out) + H(+)(in). Functionally, contributes to K(+)/H(+) antiport activity by supporting proton efflux to control proton extrusion and homeostasis in chloroplasts in a light-dependent manner to modulate photosynthesis. Prevents excessive induction of non-photochemical quenching (NPQ) under continuous-light conditions. Indirectly promotes efficient inorganic carbon uptake into chloroplasts. The polypeptide is Potassium/proton antiporter CemA (Olimarabidopsis pumila (Dwarf rocket)).